The primary structure comprises 449 residues: Phosphoglucosamine mutase (449 aa).

Ser-100 acts as the Phosphoserine intermediate in catalysis. 4 residues coordinate Mg(2+): Ser-100, Asp-241, Asp-243, and Asp-245. Ser-100 bears the Phosphoserine mark.

This sequence belongs to the phosphohexose mutase family. Requires Mg(2+) as cofactor. In terms of processing, activated by phosphorylation.

It carries out the reaction alpha-D-glucosamine 1-phosphate = D-glucosamine 6-phosphate. Its function is as follows. Catalyzes the conversion of glucosamine-6-phosphate to glucosamine-1-phosphate. In Clostridium botulinum (strain ATCC 19397 / Type A), this protein is Phosphoglucosamine mutase.